Consider the following 342-residue polypeptide: Ketol-acid reductoisomerase (NADP(+)) (342 aa).

A KARI N-terminal Rossmann domain is found at 2–181 (VKVYYNGDIQ…GGARAGVLET (180 aa)). NADP(+) is bound by residues 25-28 (YGSQ), arginine 48, serine 52, and 82-85 (DEQQ). Histidine 107 is a catalytic residue. Glycine 133 serves as a coordination point for NADP(+). The region spanning 182-327 (TFKEETETDL…RKLREMMPFV (146 aa)) is the KARI C-terminal knotted domain. Positions 190, 194, 226, and 230 each coordinate Mg(2+). Serine 251 is a substrate binding site.

It belongs to the ketol-acid reductoisomerase family. Mg(2+) is required as a cofactor.

It catalyses the reaction (2R)-2,3-dihydroxy-3-methylbutanoate + NADP(+) = (2S)-2-acetolactate + NADPH + H(+). It carries out the reaction (2R,3R)-2,3-dihydroxy-3-methylpentanoate + NADP(+) = (S)-2-ethyl-2-hydroxy-3-oxobutanoate + NADPH + H(+). It participates in amino-acid biosynthesis; L-isoleucine biosynthesis; L-isoleucine from 2-oxobutanoate: step 2/4. It functions in the pathway amino-acid biosynthesis; L-valine biosynthesis; L-valine from pyruvate: step 2/4. Involved in the biosynthesis of branched-chain amino acids (BCAA). Catalyzes an alkyl-migration followed by a ketol-acid reduction of (S)-2-acetolactate (S2AL) to yield (R)-2,3-dihydroxy-isovalerate. In the isomerase reaction, S2AL is rearranged via a Mg-dependent methyl migration to produce 3-hydroxy-3-methyl-2-ketobutyrate (HMKB). In the reductase reaction, this 2-ketoacid undergoes a metal-dependent reduction by NADPH to yield (R)-2,3-dihydroxy-isovalerate. The protein is Ketol-acid reductoisomerase (NADP(+)) of Bacillus pumilus (strain SAFR-032).